The chain runs to 205 residues: Thiamine-phosphate synthase (205 aa).

4-amino-2-methyl-5-(diphosphooxymethyl)pyrimidine is bound by residues 37–41 and Asn69; that span reads QVREK. Mg(2+)-binding residues include Asp70 and Asp89. 4-amino-2-methyl-5-(diphosphooxymethyl)pyrimidine is bound at residue Ser108. 134-136 contributes to the 2-[(2R,5Z)-2-carboxy-4-methylthiazol-5(2H)-ylidene]ethyl phosphate binding site; the sequence is TGS. Lys137 serves as a coordination point for 4-amino-2-methyl-5-(diphosphooxymethyl)pyrimidine. 2-[(2R,5Z)-2-carboxy-4-methylthiazol-5(2H)-ylidene]ethyl phosphate contacts are provided by residues Gly165 and 185–186; that span reads IS.

It belongs to the thiamine-phosphate synthase family. Requires Mg(2+) as cofactor.

The enzyme catalyses 2-[(2R,5Z)-2-carboxy-4-methylthiazol-5(2H)-ylidene]ethyl phosphate + 4-amino-2-methyl-5-(diphosphooxymethyl)pyrimidine + 2 H(+) = thiamine phosphate + CO2 + diphosphate. It catalyses the reaction 2-(2-carboxy-4-methylthiazol-5-yl)ethyl phosphate + 4-amino-2-methyl-5-(diphosphooxymethyl)pyrimidine + 2 H(+) = thiamine phosphate + CO2 + diphosphate. It carries out the reaction 4-methyl-5-(2-phosphooxyethyl)-thiazole + 4-amino-2-methyl-5-(diphosphooxymethyl)pyrimidine + H(+) = thiamine phosphate + diphosphate. It participates in cofactor biosynthesis; thiamine diphosphate biosynthesis; thiamine phosphate from 4-amino-2-methyl-5-diphosphomethylpyrimidine and 4-methyl-5-(2-phosphoethyl)-thiazole: step 1/1. Condenses 4-methyl-5-(beta-hydroxyethyl)thiazole monophosphate (THZ-P) and 2-methyl-4-amino-5-hydroxymethyl pyrimidine pyrophosphate (HMP-PP) to form thiamine monophosphate (TMP). The polypeptide is Thiamine-phosphate synthase (Clostridium botulinum (strain 657 / Type Ba4)).